A 630-amino-acid polypeptide reads, in one-letter code: tRNA uridine 5-carboxymethylaminomethyl modification enzyme MnmG (630 aa).

Residue 14–19 coordinates FAD; that stretch reads GGGHAG. Residue 282–296 coordinates NAD(+); sequence GTRYCPSIEDKVRKF.

It belongs to the MnmG family. In terms of assembly, homodimer. Heterotetramer of two MnmE and two MnmG subunits. FAD serves as cofactor.

Its subcellular location is the cytoplasm. In terms of biological role, NAD-binding protein involved in the addition of a carboxymethylaminomethyl (cmnm) group at the wobble position (U34) of certain tRNAs, forming tRNA-cmnm(5)s(2)U34. In Treponema pallidum (strain Nichols), this protein is tRNA uridine 5-carboxymethylaminomethyl modification enzyme MnmG.